A 366-amino-acid polypeptide reads, in one-letter code: 2-aminoethylphosphonate--pyruvate transaminase (366 aa).

N6-(pyridoxal phosphate)lysine is present on Lys-194.

It belongs to the class-V pyridoxal-phosphate-dependent aminotransferase family. PhnW subfamily. In terms of assembly, homodimer. Pyridoxal 5'-phosphate is required as a cofactor.

It carries out the reaction (2-aminoethyl)phosphonate + pyruvate = phosphonoacetaldehyde + L-alanine. Its function is as follows. Involved in phosphonate degradation. The chain is 2-aminoethylphosphonate--pyruvate transaminase from Lactiplantibacillus plantarum (strain ATCC BAA-793 / NCIMB 8826 / WCFS1) (Lactobacillus plantarum).